Reading from the N-terminus, the 361-residue chain is Histidinol-phosphate aminotransferase (361 aa).

N6-(pyridoxal phosphate)lysine is present on Lys218.

The protein belongs to the class-II pyridoxal-phosphate-dependent aminotransferase family. Histidinol-phosphate aminotransferase subfamily. As to quaternary structure, homodimer. Pyridoxal 5'-phosphate serves as cofactor.

The enzyme catalyses L-histidinol phosphate + 2-oxoglutarate = 3-(imidazol-4-yl)-2-oxopropyl phosphate + L-glutamate. Its pathway is amino-acid biosynthesis; L-histidine biosynthesis; L-histidine from 5-phospho-alpha-D-ribose 1-diphosphate: step 7/9. The polypeptide is Histidinol-phosphate aminotransferase (Ruegeria pomeroyi (strain ATCC 700808 / DSM 15171 / DSS-3) (Silicibacter pomeroyi)).